The chain runs to 45 residues: Cytochrome b559 subunit beta (45 aa).

A helical membrane pass occupies residues 20–36 (WLAVHTLAVPTVFFLGA). Position 24 (histidine 24) interacts with heme.

The protein belongs to the PsbE/PsbF family. As to quaternary structure, heterodimer of an alpha subunit and a beta subunit. PSII is composed of 1 copy each of membrane proteins PsbA, PsbB, PsbC, PsbD, PsbE, PsbF, PsbH, PsbI, PsbJ, PsbK, PsbL, PsbM, PsbT, PsbX, PsbY, PsbZ, Psb30/Ycf12, peripheral proteins PsbO, CyanoQ (PsbQ), PsbU, PsbV and a large number of cofactors. It forms dimeric complexes. The cofactor is heme b.

It is found in the cellular thylakoid membrane. This b-type cytochrome is tightly associated with the reaction center of photosystem II (PSII). PSII is a light-driven water:plastoquinone oxidoreductase that uses light energy to abstract electrons from H(2)O, generating O(2) and a proton gradient subsequently used for ATP formation. It consists of a core antenna complex that captures photons, and an electron transfer chain that converts photonic excitation into a charge separation. This is Cytochrome b559 subunit beta from Trichormus variabilis (strain ATCC 29413 / PCC 7937) (Anabaena variabilis).